Consider the following 505-residue polypeptide: Protein nucleotidyltransferase YdiU (505 aa).

ATP-binding residues include glycine 102, glycine 104, arginine 105, lysine 125, aspartate 137, glycine 138, arginine 188, and arginine 195. Aspartate 264 serves as the catalytic Proton acceptor. Residues asparagine 265 and aspartate 274 each coordinate Mg(2+). Aspartate 274 contributes to the ATP binding site. A disordered region spans residues phenylalanine 485–threonine 505.

This sequence belongs to the SELO family. The cofactor is Mg(2+). Mn(2+) serves as cofactor.

It carries out the reaction L-seryl-[protein] + ATP = 3-O-(5'-adenylyl)-L-seryl-[protein] + diphosphate. The catalysed reaction is L-threonyl-[protein] + ATP = 3-O-(5'-adenylyl)-L-threonyl-[protein] + diphosphate. The enzyme catalyses L-tyrosyl-[protein] + ATP = O-(5'-adenylyl)-L-tyrosyl-[protein] + diphosphate. It catalyses the reaction L-histidyl-[protein] + UTP = N(tele)-(5'-uridylyl)-L-histidyl-[protein] + diphosphate. It carries out the reaction L-seryl-[protein] + UTP = O-(5'-uridylyl)-L-seryl-[protein] + diphosphate. The catalysed reaction is L-tyrosyl-[protein] + UTP = O-(5'-uridylyl)-L-tyrosyl-[protein] + diphosphate. Its function is as follows. Nucleotidyltransferase involved in the post-translational modification of proteins. It can catalyze the addition of adenosine monophosphate (AMP) or uridine monophosphate (UMP) to a protein, resulting in modifications known as AMPylation and UMPylation. In Nitrobacter hamburgensis (strain DSM 10229 / NCIMB 13809 / X14), this protein is Protein nucleotidyltransferase YdiU.